The primary structure comprises 161 residues: Arachidonate 5-lipoxygenase-activating protein (161 aa).

Residues 1–8 (MDQETVGN) lie on the Lumenal side of the membrane. Residues 9–30 (VVLLAIVTLISVVQNGFFAHKV) traverse the membrane as a helical segment. The Cytoplasmic segment spans residues 31–52 (EHESRTQNGRSFQRTGTLAFER). The helical transmembrane segment at 53–77 (VYTANQNCVDAYPTFLAVLWSAGLL) threads the bilayer. The Lumenal segment spans residues 78 to 80 (CSQ). Residues 81-102 (VPAAFAGLMYLLVRQKYFVGYL) form a helical membrane-spanning segment. Topologically, residues 103–107 (GERTQ) are cytoplasmic. An intramembrane segment occupies 108 to 115 (STPGYIFG). The helical transmembrane segment at 116–128 (KRIILFLFLMSVA) threads the bilayer. Over 129–161 (GIFNYYLIFFFGSDFENYIKTVTTTISPLLLIP) the chain is Lumenal.

Belongs to the MAPEG family. As to quaternary structure, homotrimer. Interacts with LTC4S and ALOX5.

Its subcellular location is the nucleus membrane. It localises to the endoplasmic reticulum membrane. Functionally, required for leukotriene biosynthesis by ALOX5 (5-lipoxygenase). Anchors ALOX5 to the membrane. Binds arachidonic acid, and could play an essential role in the transfer of arachidonic acid to ALOX5. Binds to MK-886, a compound that blocks the biosynthesis of leukotrienes. The polypeptide is Arachidonate 5-lipoxygenase-activating protein (ALOX5AP) (Macaca fascicularis (Crab-eating macaque)).